Reading from the N-terminus, the 378-residue chain is Probable pectin lyase A (378 aa).

Positions 1–19 are cleaved as a signal peptide; that stretch reads MKFPAFITAIISIASLSSA. Intrachain disulfides connect C82–C101 and C91–C225. R255 is an active-site residue. A disulfide bridge connects residues C321 and C329.

Belongs to the polysaccharide lyase 1 family.

The protein localises to the secreted. The catalysed reaction is Eliminative cleavage of (1-&gt;4)-alpha-D-galacturonan methyl ester to give oligosaccharides with 4-deoxy-6-O-methyl-alpha-D-galact-4-enuronosyl groups at their non-reducing ends.. In terms of biological role, pectinolytic enzymes consist of four classes of enzymes: pectin lyase, polygalacturonase, pectin methylesterase and rhamnogalacturonase. Among pectinolytic enzymes, pectin lyase is the most important in depolymerization of pectin, since it cleaves internal glycosidic bonds of highly methylated pectins. This Aspergillus terreus (strain NIH 2624 / FGSC A1156) protein is Probable pectin lyase A (pelA).